The primary structure comprises 318 residues: BES1/BZR1 homolog protein 2 (318 aa).

Gly residues predominate over residues Met1 to Ser13. Disordered stretches follow at residues Met1 to Arg34, Phe84 to Ser133, Asn166 to Gly195, and Ala209 to Ser231. Residues Arg16–Asn97 form a required for DNA-binding region. Polar residues predominate over residues Ile91 to Asn101. Over residues Ser102–Ser133 the composition is skewed to low complexity.

It belongs to the BZR/LAT61 family. Phosphorylated. Phosphorylation increases protein degradation.

This Arabidopsis thaliana (Mouse-ear cress) protein is BES1/BZR1 homolog protein 2 (BEH2).